A 229-amino-acid chain; its full sequence is 2-C-methyl-D-erythritol 4-phosphate cytidylyltransferase (229 aa).

It belongs to the IspD/TarI cytidylyltransferase family. IspD subfamily.

The enzyme catalyses 2-C-methyl-D-erythritol 4-phosphate + CTP + H(+) = 4-CDP-2-C-methyl-D-erythritol + diphosphate. The protein operates within isoprenoid biosynthesis; isopentenyl diphosphate biosynthesis via DXP pathway; isopentenyl diphosphate from 1-deoxy-D-xylulose 5-phosphate: step 2/6. In terms of biological role, catalyzes the formation of 4-diphosphocytidyl-2-C-methyl-D-erythritol from CTP and 2-C-methyl-D-erythritol 4-phosphate (MEP). The sequence is that of 2-C-methyl-D-erythritol 4-phosphate cytidylyltransferase from Neisseria meningitidis serogroup C / serotype 2a (strain ATCC 700532 / DSM 15464 / FAM18).